The sequence spans 132 residues: Small ribosomal subunit protein uS8 (132 aa).

It belongs to the universal ribosomal protein uS8 family. In terms of assembly, part of the 30S ribosomal subunit. Contacts proteins S5 and S12.

In terms of biological role, one of the primary rRNA binding proteins, it binds directly to 16S rRNA central domain where it helps coordinate assembly of the platform of the 30S subunit. The protein is Small ribosomal subunit protein uS8 of Xanthomonas axonopodis pv. citri (strain 306).